Consider the following 337-residue polypeptide: P2Y purinoceptor 14 (337 aa).

The Extracellular segment spans residues 1–28; the sequence is MNATSVPPAEGSCPSNALITKQIIPMLY. The N-linked (GlcNAc...) asparagine glycan is linked to N2. The chain crosses the membrane as a helical span at residues 29–49; sequence FVVFVAGILLNGMSGWVFFYV. Residues 50-54 lie on the Cytoplasmic side of the membrane; the sequence is PSSKS. A helical membrane pass occupies residues 55 to 75; that stretch reads FIVYLKNIVIADFLMSLTFPF. The Extracellular portion of the chain corresponds to 76 to 95; the sequence is KILGDLGLGLWQVKVFVCRV. A disulfide bond links C93 and C171. Residues 96–116 form a helical membrane-spanning segment; the sequence is SAVLFYINMYVSIVFFGLIGF. The Cytoplasmic portion of the chain corresponds to 117–138; sequence DRYYKIVKPLLTSFIQSISYSK. A helical transmembrane segment spans residues 139–159; it reads LLSVLVWSLTLLIALPNMILT. Residues 160–187 lie on the Extracellular side of the membrane; sequence NRNVTEATRVKCMDLKSDLGLKWHKASS. A glycan (N-linked (GlcNAc...) asparagine) is linked at N162. The chain crosses the membrane as a helical span at residues 188-208; that stretch reads YIFVGIFWIVFLSLIIFYTAI. Residues 209-233 lie on the Cytoplasmic side of the membrane; the sequence is TKKIFKSHFKSRKNSVSVKKKSSRN. The chain crosses the membrane as a helical span at residues 234–254; sequence IFSIMFVFFICFVPYHIARIP. Topologically, residues 255–277 are extracellular; sequence YTQSQTEAHYSCQSKQILFYVKE. The helical transmembrane segment at 278 to 298 threads the bilayer; it reads FSLLLSAANVCLDPIIYFFLC. The Cytoplasmic portion of the chain corresponds to 299–337; it reads QPFREVLCKKLHIQLKTQHDSETSKIKRENIIQESTDTL.

Belongs to the G-protein coupled receptor 1 family.

The protein localises to the cell membrane. Its function is as follows. Receptor for UDP-glucose and other UDP-sugar coupled to G-proteins. Not activated by ATP, ADP, UTP or ATP. This is P2Y purinoceptor 14 (P2RY14) from Bos taurus (Bovine).